The primary structure comprises 884 residues: Protein translocase subunit SecA (884 aa).

ATP-binding positions include Q88, G106–T110, and D509. The disordered stretch occupies residues E822–D884. Positions K833–K842 are enriched in basic and acidic residues. The Zn(2+) site is built by C858, C860, C869, and H870.

The protein belongs to the SecA family. As to quaternary structure, monomer and homodimer. Part of the essential Sec protein translocation apparatus which comprises SecA, SecYEG and auxiliary proteins SecDF-YajC and YidC. The cofactor is Zn(2+).

The protein resides in the cell inner membrane. Its subcellular location is the cytoplasm. It carries out the reaction ATP + H2O + cellular proteinSide 1 = ADP + phosphate + cellular proteinSide 2.. Its function is as follows. Part of the Sec protein translocase complex. Interacts with the SecYEG preprotein conducting channel. Has a central role in coupling the hydrolysis of ATP to the transfer of proteins into and across the cell membrane, serving as an ATP-driven molecular motor driving the stepwise translocation of polypeptide chains across the membrane. The chain is Protein translocase subunit SecA from Campylobacter hominis (strain ATCC BAA-381 / DSM 21671 / CCUG 45161 / LMG 19568 / NCTC 13146 / CH001A).